We begin with the raw amino-acid sequence, 88 residues long: MTLLASISSIGNVKSISKSNNFSSLSNSSLQSSNSIQCGGCGGSPLIGTVGNLVGGVLVGTGIIVGTVVGTVNGVVGGLLSGPNCGCH.

The protein belongs to the hssA/B family.

The sequence is that of HssA/B-like protein 12 (hssl12) from Dictyostelium discoideum (Social amoeba).